A 94-amino-acid chain; its full sequence is MRKYETVFILNPALDEEGYKANVEKFKGVIENAGGTVDNVDLWGKRKLAYEVKKVSEGYYTLMNFTADTELPKELDRVFRITDTVIRHMIITQE.

The protein belongs to the bacterial ribosomal protein bS6 family.

Its function is as follows. Binds together with bS18 to 16S ribosomal RNA. The sequence is that of Small ribosomal subunit protein bS6 from Clostridium botulinum (strain Kyoto / Type A2).